A 334-amino-acid polypeptide reads, in one-letter code: Protein-methionine-sulfoxide reductase catalytic subunit MsrP (334 aa).

The segment at residues 1-44 (MKKNQFLKESDVTAESVFFMKRRQVLKALGISATALSLPHAAHA) is a signal peptide (tat-type signal). Mo-molybdopterin contacts are provided by residues asparagine 88, 91–92 (YE), cysteine 146, threonine 181, asparagine 233, arginine 238, and 249–251 (GIK).

This sequence belongs to the MsrP family. Heterodimer of a catalytic subunit (MsrP) and a heme-binding subunit (MsrQ). Mo-molybdopterin serves as cofactor. In terms of processing, exported by the Tat system. Can also be exported by the Sec system.

Its subcellular location is the periplasm. It carries out the reaction L-methionyl-[protein] + a quinone + H2O = L-methionyl-(S)-S-oxide-[protein] + a quinol. The enzyme catalyses L-methionyl-[protein] + a quinone + H2O = L-methionyl-(R)-S-oxide-[protein] + a quinol. In terms of biological role, part of the MsrPQ system that repairs oxidized periplasmic proteins containing methionine sulfoxide residues (Met-O), using respiratory chain electrons. Thus protects these proteins from oxidative-stress damage caused by reactive species of oxygen and chlorine. MsrPQ is essential for the maintenance of envelope integrity under bleach stress, rescuing a wide series of structurally unrelated periplasmic proteins from methionine oxidation, including the primary periplasmic chaperone SurA and the lipoprotein Pal. The catalytic subunit MsrP is non-stereospecific, being able to reduce both (R-) and (S-) diastereoisomers of methionine sulfoxide. Can catalyze the reduction of a variety of substrates in vitro, including dimethyl sulfoxide, trimethylamine N-oxide, phenylmethyl sulfoxide and L-methionine sulfoxide. Cannot reduce cyclic N-oxides. Shows no activity as sulfite oxidase. In Escherichia coli (strain K12), this protein is Protein-methionine-sulfoxide reductase catalytic subunit MsrP.